Reading from the N-terminus, the 288-residue chain is MVSRVRLYFGYTKPKVWSLLVFVGVIGAIVAINRFTLTNILLILIATVSITLGSMGAEATTNYIDRDIDAIMDRTKKRPLVTGQIKPVKGLYFGLILMFLSIIILLFFSKYLAAVFMAIGLFDNVFIYSYLTKRRTPWNIILGGFSGGFPVVIGWYTVTNAFSVLPWFLFALVVIWIPIHVWSLAYRYRDDYNRARVPMMTSIQSDRISAICISSSAVILFIFSIIPVFFKAMPYTYMIVATIIAIPMLVYSVLFVRKPDRKSSLKLFIYSSPYLAIIFVLVLIFKYL.

9 consecutive transmembrane segments (helical) span residues 16 to 36, 37 to 57, 88 to 108, 111 to 131, 138 to 158, 162 to 182, 210 to 230, 236 to 256, and 265 to 285; these read VWSL…NRFT, LTNI…SMGA, VKGL…LLFF, YLAA…YSYL, WNII…WYTV, FSVL…IHVW, AICI…PVFF, TYMI…VLFV, and LKLF…VLIF.

It belongs to the UbiA prenyltransferase family. Protoheme IX farnesyltransferase subfamily.

It is found in the cell membrane. The catalysed reaction is heme b + (2E,6E)-farnesyl diphosphate + H2O = Fe(II)-heme o + diphosphate. It participates in porphyrin-containing compound metabolism; heme O biosynthesis; heme O from protoheme: step 1/1. Its function is as follows. Converts heme B (protoheme IX) to heme O by substitution of the vinyl group on carbon 2 of heme B porphyrin ring with a hydroxyethyl farnesyl side group. In Thermoplasma volcanium (strain ATCC 51530 / DSM 4299 / JCM 9571 / NBRC 15438 / GSS1), this protein is Protoheme IX farnesyltransferase.